The primary structure comprises 688 residues: DNA ligase (688 aa).

NAD(+)-binding positions include 51-55 (DSEYD), 100-101 (SL), and E129. The N6-AMP-lysine intermediate role is filled by K131. The NAD(+) site is built by R152, E189, K308, and K332. Residues C426, C429, C444, and C450 each coordinate Zn(2+). Residues 609-688 (ADEQPLKGQT…DELLALLANS (80 aa)) enclose the BRCT domain.

This sequence belongs to the NAD-dependent DNA ligase family. LigA subfamily. Mg(2+) serves as cofactor. The cofactor is Mn(2+).

It carries out the reaction NAD(+) + (deoxyribonucleotide)n-3'-hydroxyl + 5'-phospho-(deoxyribonucleotide)m = (deoxyribonucleotide)n+m + AMP + beta-nicotinamide D-nucleotide.. Its function is as follows. DNA ligase that catalyzes the formation of phosphodiester linkages between 5'-phosphoryl and 3'-hydroxyl groups in double-stranded DNA using NAD as a coenzyme and as the energy source for the reaction. It is essential for DNA replication and repair of damaged DNA. The chain is DNA ligase from Shewanella sp. (strain MR-7).